Reading from the N-terminus, the 353-residue chain is Photosystem II protein D1 (353 aa).

Thr-2 is subject to N-acetylthreonine. Position 2 is a phosphothreonine (Thr-2). The next 3 helical transmembrane spans lie at 29–46 (YIGWFGVLMIPTLLTATS), 118–133 (HFLLGVACYMGREWEL), and 142–156 (WIAVAYSAPVAAATA). Residue His-118 coordinates chlorophyll a. Pheophytin a is bound at residue Tyr-126. Residues Asp-170 and Glu-189 each coordinate [CaMn4O5] cluster. Residues 197–218 (FHMLGVAGVFGGSLFSAMHGSL) form a helical membrane-spanning segment. Chlorophyll a is bound at residue His-198. Residues His-215 and 264-265 (SF) contribute to the a quinone site. His-215 is a Fe cation binding site. Position 272 (His-272) interacts with Fe cation. The helical transmembrane segment at 274–288 (FLAAWPVVGIWFTAL) threads the bilayer. Residues His-332, Glu-333, Asp-342, and Ala-344 each contribute to the [CaMn4O5] cluster site. Positions 345–353 (AIEAPSTNG) are excised as a propeptide.

Belongs to the reaction center PufL/M/PsbA/D family. As to quaternary structure, PSII is composed of 1 copy each of membrane proteins PsbA, PsbB, PsbC, PsbD, PsbE, PsbF, PsbH, PsbI, PsbJ, PsbK, PsbL, PsbM, PsbT, PsbX, PsbY, PsbZ, Psb30/Ycf12, at least 3 peripheral proteins of the oxygen-evolving complex and a large number of cofactors. It forms dimeric complexes. It depends on The D1/D2 heterodimer binds P680, chlorophylls that are the primary electron donor of PSII, and subsequent electron acceptors. It shares a non-heme iron and each subunit binds pheophytin, quinone, additional chlorophylls, carotenoids and lipids. D1 provides most of the ligands for the Mn4-Ca-O5 cluster of the oxygen-evolving complex (OEC). There is also a Cl(-1) ion associated with D1 and D2, which is required for oxygen evolution. The PSII complex binds additional chlorophylls, carotenoids and specific lipids. as a cofactor. In terms of processing, tyr-161 forms a radical intermediate that is referred to as redox-active TyrZ, YZ or Y-Z. Post-translationally, C-terminally processed by CTPA; processing is essential to allow assembly of the oxygen-evolving complex and thus photosynthetic growth.

Its subcellular location is the plastid. It localises to the chloroplast thylakoid membrane. The enzyme catalyses 2 a plastoquinone + 4 hnu + 2 H2O = 2 a plastoquinol + O2. Its function is as follows. Photosystem II (PSII) is a light-driven water:plastoquinone oxidoreductase that uses light energy to abstract electrons from H(2)O, generating O(2) and a proton gradient subsequently used for ATP formation. It consists of a core antenna complex that captures photons, and an electron transfer chain that converts photonic excitation into a charge separation. The D1/D2 (PsbA/PsbD) reaction center heterodimer binds P680, the primary electron donor of PSII as well as several subsequent electron acceptors. The polypeptide is Photosystem II protein D1 (Gossypium barbadense (Sea Island cotton)).